A 455-amino-acid polypeptide reads, in one-letter code: Bifunctional protein GlmU (455 aa).

The segment at 1-229 is pyrophosphorylase; the sequence is MYNCAILLAA…FEETMGVNSR (229 aa). UDP-N-acetyl-alpha-D-glucosamine contacts are provided by residues 8-11, lysine 22, glutamine 73, and 78-79; these read LAAG and GT. Residue aspartate 103 coordinates Mg(2+). Glycine 140, glutamate 155, asparagine 170, and asparagine 227 together coordinate UDP-N-acetyl-alpha-D-glucosamine. Asparagine 227 serves as a coordination point for Mg(2+). A linker region spans residues 230 to 250; sequence LQLAEVEAIMRKRINAMHLEN. The tract at residues 251–455 is N-acetyltransferase; the sequence is GVTIIDPNNT…EDWVKKKDEK (205 aa). Residues arginine 332 and lysine 350 each coordinate UDP-N-acetyl-alpha-D-glucosamine. The Proton acceptor role is filled by histidine 362. Tyrosine 365 and asparagine 376 together coordinate UDP-N-acetyl-alpha-D-glucosamine. Acetyl-CoA contacts are provided by residues 385–386, alanine 422, and arginine 439; that span reads NY.

The protein in the N-terminal section; belongs to the N-acetylglucosamine-1-phosphate uridyltransferase family. In the C-terminal section; belongs to the transferase hexapeptide repeat family. In terms of assembly, homotrimer. Mg(2+) serves as cofactor.

The protein resides in the cytoplasm. The catalysed reaction is alpha-D-glucosamine 1-phosphate + acetyl-CoA = N-acetyl-alpha-D-glucosamine 1-phosphate + CoA + H(+). It carries out the reaction N-acetyl-alpha-D-glucosamine 1-phosphate + UTP + H(+) = UDP-N-acetyl-alpha-D-glucosamine + diphosphate. It functions in the pathway nucleotide-sugar biosynthesis; UDP-N-acetyl-alpha-D-glucosamine biosynthesis; N-acetyl-alpha-D-glucosamine 1-phosphate from alpha-D-glucosamine 6-phosphate (route II): step 2/2. The protein operates within nucleotide-sugar biosynthesis; UDP-N-acetyl-alpha-D-glucosamine biosynthesis; UDP-N-acetyl-alpha-D-glucosamine from N-acetyl-alpha-D-glucosamine 1-phosphate: step 1/1. It participates in bacterial outer membrane biogenesis; LPS lipid A biosynthesis. In terms of biological role, catalyzes the last two sequential reactions in the de novo biosynthetic pathway for UDP-N-acetylglucosamine (UDP-GlcNAc). The C-terminal domain catalyzes the transfer of acetyl group from acetyl coenzyme A to glucosamine-1-phosphate (GlcN-1-P) to produce N-acetylglucosamine-1-phosphate (GlcNAc-1-P), which is converted into UDP-GlcNAc by the transfer of uridine 5-monophosphate (from uridine 5-triphosphate), a reaction catalyzed by the N-terminal domain. The chain is Bifunctional protein GlmU from Clostridium tetani (strain Massachusetts / E88).